The chain runs to 198 residues: MRYYPQPMGKLINQLSRLPGIGPKTAQRLAFYILRLNPSEVRELSQSMIDAREKTKYCSVCNNLTEKDPCDFCSSPERDHNLICVVESPKDVIAMERTGEYKGLYHVLHGSISPIDGIGPEDIKIRNLLPRLKEGVKEVIVATDPNAEGDATAMYLARLIKPLGVKVTRIAHGLPVGGDLEYADEVTLSKALEGRREM.

A C4-type zinc finger spans residues 58 to 73 (CSVCNNLTEKDPCDFC). The region spanning 81-175 (NLICVVESPK…KVTRIAHGLP (95 aa)) is the Toprim domain.

This sequence belongs to the RecR family.

Its function is as follows. May play a role in DNA repair. It seems to be involved in an RecBC-independent recombinational process of DNA repair. It may act with RecF and RecO. The chain is Recombination protein RecR from Halothermothrix orenii (strain H 168 / OCM 544 / DSM 9562).